Reading from the N-terminus, the 315-residue chain is MQIKLANPRGFCAGVDRAIEIVNRALEVFGPPIYVRHEVVHNKFVVEDLRSRGAIFVEELEQVPDDVIVIFSAHGVSQAVRTEAAGRGLKVFDATCPLVTKVHIEVARYSRDGRECILIGHAGHPEVEGTMGQYDAVNGGAIYLVEDEADVASLEVRNPESLAFVTQTTLSMDDTSRVIDALRKRFPAIGGPRKDDICYATQNRQDAVKQLADECDVVLVVGSPNSSNSNRLRELAERMATPAYLIDGAEDMQKGWFDGVERIGITAGASAPEVLVRGVIQQLQAWGATGADELAGREENITFSMPKELRVKSLL.

Cys12 lines the [4Fe-4S] cluster pocket. Residues His41 and His74 each contribute to the (2E)-4-hydroxy-3-methylbut-2-enyl diphosphate site. Positions 41 and 74 each coordinate dimethylallyl diphosphate. Isopentenyl diphosphate-binding residues include His41 and His74. [4Fe-4S] cluster is bound at residue Cys96. His124 serves as a coordination point for (2E)-4-hydroxy-3-methylbut-2-enyl diphosphate. Dimethylallyl diphosphate is bound at residue His124. His124 lines the isopentenyl diphosphate pocket. Glu126 functions as the Proton donor in the catalytic mechanism. Thr168 is a (2E)-4-hydroxy-3-methylbut-2-enyl diphosphate binding site. Cys198 serves as a coordination point for [4Fe-4S] cluster. (2E)-4-hydroxy-3-methylbut-2-enyl diphosphate contacts are provided by Ser226, Ser227, Asn228, and Ser270. Ser226, Ser227, Asn228, and Ser270 together coordinate dimethylallyl diphosphate. Residues Ser226, Ser227, Asn228, and Ser270 each coordinate isopentenyl diphosphate.

The protein belongs to the IspH family. Requires [4Fe-4S] cluster as cofactor.

The catalysed reaction is isopentenyl diphosphate + 2 oxidized [2Fe-2S]-[ferredoxin] + H2O = (2E)-4-hydroxy-3-methylbut-2-enyl diphosphate + 2 reduced [2Fe-2S]-[ferredoxin] + 2 H(+). It carries out the reaction dimethylallyl diphosphate + 2 oxidized [2Fe-2S]-[ferredoxin] + H2O = (2E)-4-hydroxy-3-methylbut-2-enyl diphosphate + 2 reduced [2Fe-2S]-[ferredoxin] + 2 H(+). Its pathway is isoprenoid biosynthesis; dimethylallyl diphosphate biosynthesis; dimethylallyl diphosphate from (2E)-4-hydroxy-3-methylbutenyl diphosphate: step 1/1. The protein operates within isoprenoid biosynthesis; isopentenyl diphosphate biosynthesis via DXP pathway; isopentenyl diphosphate from 1-deoxy-D-xylulose 5-phosphate: step 6/6. Its function is as follows. Catalyzes the conversion of 1-hydroxy-2-methyl-2-(E)-butenyl 4-diphosphate (HMBPP) into a mixture of isopentenyl diphosphate (IPP) and dimethylallyl diphosphate (DMAPP). Acts in the terminal step of the DOXP/MEP pathway for isoprenoid precursor biosynthesis. The chain is 4-hydroxy-3-methylbut-2-enyl diphosphate reductase from Pseudomonas syringae pv. tomato (strain ATCC BAA-871 / DC3000).